Consider the following 301-residue polypeptide: Mycothiol acetyltransferase (301 aa).

N-acetyltransferase domains follow at residues 6 to 151 (EWRQ…ILRD) and 153 to 301 (VSLR…QYGR). Residue 79–81 (LFV) coordinates acetyl-CoA. Residues Glu-180, Lys-219, and Glu-235 each contribute to the 1D-myo-inositol 2-(L-cysteinylamino)-2-deoxy-alpha-D-glucopyranoside site. Residues 239 to 241 (VGV) and 246 to 252 (QGGGLGR) contribute to the acetyl-CoA site. Residue Tyr-273 participates in 1D-myo-inositol 2-(L-cysteinylamino)-2-deoxy-alpha-D-glucopyranoside binding.

This sequence belongs to the acetyltransferase family. MshD subfamily. Monomer.

It carries out the reaction 1D-myo-inositol 2-(L-cysteinylamino)-2-deoxy-alpha-D-glucopyranoside + acetyl-CoA = mycothiol + CoA + H(+). Functionally, catalyzes the transfer of acetyl from acetyl-CoA to desacetylmycothiol (Cys-GlcN-Ins) to form mycothiol. This is Mycothiol acetyltransferase from Amycolatopsis mediterranei (strain U-32).